The primary structure comprises 1321 residues: Indole-3-acetaldehyde oxidase (1321 aa).

A 2Fe-2S ferredoxin-type domain is found at 1–90; the sequence is MSLVFAINGQ…HCNITTSEGL (90 aa). The [2Fe-2S] cluster site is built by C42, C47, and C50. The FAD-binding PCMH-type domain maps to 215–404; the sequence is VDSGMYRWCS…LSIEIPFWHS (190 aa).

The protein belongs to the xanthine dehydrogenase family. As to quaternary structure, aldehyde oxidases (AO) are homodimers and heterodimers of AO subunits. AO-beta is a AAO1-AAO2 heterodimer; AO-gamma is a AAO2 homodimer. AAO2 also forms a dimer with AAO3. The cofactor is [2Fe-2S] cluster. Requires FAD as cofactor. Mo-molybdopterin is required as a cofactor. As to expression, weakly expressed in roots, leaves and seedlings. In seedlings, mostly expressed in lower part of hypocotyls. Detectable in seeds and mature siliques at low levels.

It is found in the cytoplasm. It carries out the reaction indole-3-acetaldehyde + O2 + H2O = (indol-3-yl)acetate + H2O2 + H(+). Its activity is regulated as follows. Strongly inhibited by iodoacetate, potassium cyanide (KCN), 2-mercaptoethanol, dithiothreitol (DTT), p-chloromercuribenzoate, menadione and estradiol. Weakly inhibited by 4'-(9-acridinylamino)methanesulfon-m-anisidine (mAMSA) and tritonX-100. Not affected by allopurinol. In higher plant aldehyde oxidases (AO) appear to be homo- and heterodimeric assemblies of AO subunits with probably different physiological functions. In vitro, AO-gamma uses heptaldehyde, benzaldehyde, naphthaldehyde and cinnamaldehyde as substrates; AO-beta uses indole-3-acetaldehyde (IAAld), indole-3-aldehyde (IAld) and naphtaldehyde; the AAO2-AAO3 dimer uses abscisic aldehyde. This Arabidopsis thaliana (Mouse-ear cress) protein is Indole-3-acetaldehyde oxidase (AAO2).